The following is a 1693-amino-acid chain: 1-phosphatidylinositol 4,5-bisphosphate phosphodiesterase eta-1 (1693 aa).

One can recognise a PH domain in the interval 20 to 128; that stretch reads SVMQSGTQMI…WITGLKYLMA (109 aa). 3 EF-hand domains span residues 142 to 177, 178 to 214, and 226 to 246; these read THDQ…LNVN, LPRR…MSLR, and DKKD…EQKM. Residues Asp155, Asn157, Asp159, and Glu166 each contribute to the Ca(2+) site. In terms of domain architecture, PI-PLC X-box spans 299–444; sequence QDMDQPLCNY…LKGKILVKGK (146 aa). The active site involves His314. Ca(2+) contacts are provided by Asn315, Glu344, and Asp346. His358 is an active-site residue. Residue Glu393 coordinates Ca(2+). Substrate-binding residues include Lys442 and Lys444. The interval 526 to 585 is disordered; that stretch reads LNAHLKQSPDVKESGKKSHGRSLMTNFGKHKKTTKSRSKSYSTDDEEDTQQSTGKEGGQL. Basic and acidic residues predominate over residues 532 to 541; the sequence is QSPDVKESGK. The span at 553–563 shows a compositional bias: basic residues; sequence GKHKKTTKSRS. Positions 601–714 constitute a PI-PLC Y-box domain; that stretch reads LSDLVVYTNS…GYVLKPQQMC (114 aa). Substrate contacts are provided by Ser627 and Arg654. Positions 715–843 constitute a C2 domain; it reads KGTFNPFSGD…PGYRHVYLEG (129 aa). 6 residues coordinate Ca(2+): Ile758, Asp760, Asp784, Asp813, His814, and Asp815. The segment covering 992-1005 has biased composition (basic and acidic residues); it reads IEGKENSLAEDKDG. Disordered stretches follow at residues 992–1014, 1052–1089, 1300–1329, and 1578–1613; these read IEGK…ASIK, TGEQ…PKQH, LESN…ETLK, and LSSR…GAGV. A compositionally biased stretch (polar residues) spans 1065 to 1086; it reads RTTSNATSNCQENPCPSKSLSP. The segment covering 1592 to 1601 has biased composition (basic and acidic residues); the sequence is RAKEKQEANK.

Ca(2+) serves as cofactor. As to expression, expressed in brain and to a lower extent in lung. In brain, it is found in cerebrum, cerebellum and spinal cord. In embryo expressed in the notochord, developing spinal cord (in a ventral to dorsal gradient), dorsal root ganglia, cerebellum and dermatomyosome.

Its subcellular location is the cytoplasm. It localises to the membrane. The catalysed reaction is a 1,2-diacyl-sn-glycero-3-phospho-(1D-myo-inositol-4,5-bisphosphate) + H2O = 1D-myo-inositol 1,4,5-trisphosphate + a 1,2-diacyl-sn-glycerol + H(+). Functionally, the production of the second messenger molecules diacylglycerol (DAG) and inositol 1,4,5-trisphosphate (IP3) is mediated by calcium-activated phosphatidylinositol-specific phospholipase C enzymes. This Homo sapiens (Human) protein is 1-phosphatidylinositol 4,5-bisphosphate phosphodiesterase eta-1.